Reading from the N-terminus, the 69-residue chain is Small, acid-soluble spore protein A (69 aa).

The protein belongs to the alpha/beta-type SASP family.

Functionally, SASP are bound to spore DNA. They are double-stranded DNA-binding proteins that cause DNA to change to an a-like conformation. They protect the DNA backbone from chemical and enzymatic cleavage and are thus involved in dormant spore's high resistance to UV light. The sequence is that of Small, acid-soluble spore protein A (sspA) from Bacillus subtilis (strain 168).